Consider the following 450-residue polypeptide: Glucose-6-phosphate isomerase (450 aa).

Residue Glu-291 is the Proton donor of the active site. Active-site residues include His-312 and Lys-426.

The protein belongs to the GPI family.

The protein localises to the cytoplasm. The catalysed reaction is alpha-D-glucose 6-phosphate = beta-D-fructose 6-phosphate. Its pathway is carbohydrate biosynthesis; gluconeogenesis. It participates in carbohydrate degradation; glycolysis; D-glyceraldehyde 3-phosphate and glycerone phosphate from D-glucose: step 2/4. Functionally, catalyzes the reversible isomerization of glucose-6-phosphate to fructose-6-phosphate. The chain is Glucose-6-phosphate isomerase from Clostridium botulinum (strain Hall / ATCC 3502 / NCTC 13319 / Type A).